Reading from the N-terminus, the 346-residue chain is MHRFLFALDPEAAHGLALGLLALWSERGPLLEVPARLLRVEDPRLRVEAFGVSFPNPLGLAAGMDKDARALGAWWALGFGFAEVGTLTPRPQVGNPKPRLFRLVEDRALINRMGFNNRGAEEAARRLKRSRQRGLPLPIGVNLGKNRDTPLGRAAEDYLKALRLLEPFGDYFVLNVSSPNTPGLRALQEGPFLDELLARLRPATKKPLLLKVAPDLSPKALDEVLALAKKHRLQGLVAVNTTLAREGLKSPWAKEAGGLSGRPLKGRALEVLRHLAEGAEGLALVSVGGVETPLDLWERLKAGASLVQVYTGFVYGGPLFPRRLLLGLLRLMEAEGVSSLGELRRA.

FMN contacts are provided by residues 62 to 66 (AGMDK) and threonine 86. A substrate-binding site is contributed by lysine 66. 111–115 (NRMGF) is a binding site for substrate. FMN is bound by residues asparagine 142 and asparagine 175. Asparagine 175 contributes to the substrate binding site. The active-site Nucleophile is serine 178. Substrate is bound at residue asparagine 180. Residues lysine 211 and valine 239 each coordinate FMN. A substrate-binding site is contributed by 240–241 (NT). FMN is bound by residues glycine 261, glycine 289, and 310 to 311 (YT).

The protein belongs to the dihydroorotate dehydrogenase family. Type 2 subfamily. As to quaternary structure, monomer. FMN serves as cofactor.

It is found in the cell membrane. It carries out the reaction (S)-dihydroorotate + a quinone = orotate + a quinol. Its pathway is pyrimidine metabolism; UMP biosynthesis via de novo pathway; orotate from (S)-dihydroorotate (quinone route): step 1/1. Catalyzes the conversion of dihydroorotate to orotate with quinone as electron acceptor. In Thermus thermophilus (strain ATCC 27634 / DSM 579 / HB8), this protein is Dihydroorotate dehydrogenase (quinone).